A 353-amino-acid polypeptide reads, in one-letter code: Uroporphyrinogen decarboxylase (353 aa).

Substrate is bound by residues 33–37, D82, Y158, S213, and H332; that span reads RQAGR.

Belongs to the uroporphyrinogen decarboxylase family. In terms of assembly, homodimer.

It is found in the cytoplasm. It carries out the reaction uroporphyrinogen III + 4 H(+) = coproporphyrinogen III + 4 CO2. It functions in the pathway porphyrin-containing compound metabolism; protoporphyrin-IX biosynthesis; coproporphyrinogen-III from 5-aminolevulinate: step 4/4. Its function is as follows. Catalyzes the decarboxylation of four acetate groups of uroporphyrinogen-III to yield coproporphyrinogen-III. In Gluconobacter oxydans (strain 621H) (Gluconobacter suboxydans), this protein is Uroporphyrinogen decarboxylase.